A 56-amino-acid chain; its full sequence is Small ribosomal subunit protein uS14A (56 aa).

2 residues coordinate Zn(2+): Cys-21 and Cys-24. Ser-25 carries the post-translational modification Phosphoserine. 2 residues coordinate Zn(2+): Cys-39 and Cys-42.

Belongs to the universal ribosomal protein uS14 family. Component of the small ribosomal subunit (SSU). Mature yeast ribosomes consist of a small (40S) and a large (60S) subunit. The 40S small subunit contains 1 molecule of ribosomal RNA (18S rRNA) and 33 different proteins (encoded by 57 genes). The large 60S subunit contains 3 rRNA molecules (25S, 5.8S and 5S rRNA) and 46 different proteins (encoded by 81 genes). Zn(2+) is required as a cofactor.

The protein localises to the cytoplasm. Its function is as follows. Component of the ribosome, a large ribonucleoprotein complex responsible for the synthesis of proteins in the cell. The small ribosomal subunit (SSU) binds messenger RNAs (mRNAs) and translates the encoded message by selecting cognate aminoacyl-transfer RNA (tRNA) molecules. The large subunit (LSU) contains the ribosomal catalytic site termed the peptidyl transferase center (PTC), which catalyzes the formation of peptide bonds, thereby polymerizing the amino acids delivered by tRNAs into a polypeptide chain. The nascent polypeptides leave the ribosome through a tunnel in the LSU and interact with protein factors that function in enzymatic processing, targeting, and the membrane insertion of nascent chains at the exit of the ribosomal tunnel. This Saccharomyces cerevisiae (strain ATCC 204508 / S288c) (Baker's yeast) protein is Small ribosomal subunit protein uS14A.